A 174-amino-acid chain; its full sequence is Extracellular cysteine protease (174 aa).

Active-site residues include Cys-24, His-120, and Asn-141.

Belongs to the peptidase C47 family. In terms of processing, proteolytically cleaved.

The protein resides in the secreted. It is found in the cell wall. With respect to regulation, inhibited by heavy metal ions such as Zn(2+) or Ni(2+), iodoacetamide, N-ethylmaleimide, leupeptin, SDS and E-64. Also inhibited by chloromethylketones TPCK and TLCK and by human plasma inhibitor alpha-2-macroglobulin. Stimulated by L-cysteine. Its function is as follows. Cysteine protease able to cleave elastin, insulin, myoglobin, fibronectin, fibrinogen, HMW-kininogen, alpha-1-protease inhibitor and alpha-1-antitrypsin. Along with other extracellular proteases may contribute to the colonization and infection of human tissues. This is Extracellular cysteine protease (ecpA) from Staphylococcus epidermidis.